Reading from the N-terminus, the 720-residue chain is Polyribonucleotide nucleotidyltransferase (720 aa).

Mg(2+) is bound by residues Asp484 and Asp490. A KH domain is found at 551–610; it reads PRMYKISIDPSKIGSVIGSGGKTIRSIIEQTNTTVDIENDGTVVIGATDEASAQKAIKII. Positions 620 to 688 constitute an S1 motif domain; sequence GSVYTGKVTR…SQGRINLSRR (69 aa). The disordered stretch occupies residues 697–720; that stretch reads PISRNRDSQPRRSGPFRPQDRSNS.

Belongs to the polyribonucleotide nucleotidyltransferase family. It depends on Mg(2+) as a cofactor.

The protein resides in the cytoplasm. The enzyme catalyses RNA(n+1) + phosphate = RNA(n) + a ribonucleoside 5'-diphosphate. Functionally, involved in mRNA degradation. Catalyzes the phosphorolysis of single-stranded polyribonucleotides processively in the 3'- to 5'-direction. This is Polyribonucleotide nucleotidyltransferase from Dehalococcoides mccartyi (strain ATCC BAA-2266 / KCTC 15142 / 195) (Dehalococcoides ethenogenes (strain 195)).